The sequence spans 553 residues: Putative transport protein YidE (553 aa).

5 consecutive transmembrane segments (helical) span residues Ile4–Ile24, Gly28–Asp48, Phe65–Ser85, Leu95–Phe115, and Met158–Met178. 2 RCK C-terminal domains span residues Lys192–Lys276 and Asp279–Asn361. The next 6 helical transmembrane spans lie at Met371 to Val391, Gly393 to Leu413, Leu437 to Thr457, Leu464 to Leu484, Tyr493 to Ala513, and Leu533 to Gly553.

This sequence belongs to the AAE transporter (TC 2.A.81) family. YidE subfamily.

Its subcellular location is the cell membrane. The sequence is that of Putative transport protein YidE from Salmonella heidelberg (strain SL476).